The sequence spans 840 residues: MTQVTVKELAQVVDTPVERLLLQMRDAGLPHTSAEQVVTDSEKQALLTHLKGSHGDRASEPRKITLQRKTTTTLKVGGSKTVSVEVRKKKTYVKRSPDEIEAERQRELEEQRAAEEAERLKAEEAAARQRAEEEARKAEEAARAKAAQEAAATAGAEPAVVADVAVAEPVAKPAAVEERKKEEPRRAPKRDEDDDRRDRKHTQHRPSVKEKEKVPAPRVAPRSTDEESDGYRRGGRGGKSKLKKRNQHGFQNPTGPIVREVNIGETITVAELAAQMSVKGAEVVKFMFKMGSPVTINQVLDQETAQLVAEELGHKVKLVSENALEEQLAESLKFEGEAVTRAPVVTVMGHVDHGKTSLLDYIRRAKVAAGEAGGITQHIGAYHVETERGMVTFLDTPGHAAFTAMRARGAQATDIVILVVAADDGVMPQTQEAVQHAKAAGVPIVVAVNKIDKPEANPDNIKNGLAALDVIPEEWGGDAPFVPVSAKLGTGVDELLEAVLLQAEVLELKATPSAPGRGVVVESRLDKGRGPVATVLVQDGTLRQGDMVLVGINYGRVRAMLDENGKPIKEAGPSIPVEILGLDGTPDAGDEMTVVADEKKAREVALFRQGKFREVKLARAHAGKLENIFENMGQEEKKTLNIVLKADVRGSLEALQGSLSGLGNDEVQVRVVGGGVGGITESDANLALASNAVLFGFNVRADAGARKIVEAEGLDMRYYNVIYDIIEDVKKALTGMLGSDLRENILGIAEVRDVFRSPKFGAIAGCMVTEGMVHRNRPIRVLRDDVVIFEGELESLRRFKDDVAEVRAGMECGIGVKSYNDVKVGDKIEVFEKVEVARSL.

Over residues 95–143 the composition is skewed to basic and acidic residues; sequence RSPDEIEAERQRELEEQRAAEEAERLKAEEAAARQRAEEEARKAEEAAR. Disordered regions lie at residues 95–155 and 172–256; these read RSPD…ATAG and KPAA…PTGP. Residues 144-155 are compositionally biased toward low complexity; the sequence is AKAAQEAAATAG. Basic and acidic residues-rich tracts occupy residues 175–191 and 223–232; these read AVEERKKEEPRRAPKRD and STDEESDGYR. A compositionally biased stretch (basic residues) spans 233–247; that stretch reads RGGRGGKSKLKKRNQ. The region spanning 340-509 is the tr-type G domain; sequence TRAPVVTVMG…LLQAEVLELK (170 aa). The tract at residues 349–356 is G1; sequence GHVDHGKT. 349 to 356 contributes to the GTP binding site; sequence GHVDHGKT. Residues 374-378 form a G2 region; that stretch reads GITQH. Positions 395–398 are G3; sequence DTPG. Residues 395-399 and 449-452 each bind GTP; these read DTPGH and NKID. The G4 stretch occupies residues 449–452; that stretch reads NKID. The G5 stretch occupies residues 485 to 487; sequence SAK.

Belongs to the TRAFAC class translation factor GTPase superfamily. Classic translation factor GTPase family. IF-2 subfamily.

Its subcellular location is the cytoplasm. Functionally, one of the essential components for the initiation of protein synthesis. Protects formylmethionyl-tRNA from spontaneous hydrolysis and promotes its binding to the 30S ribosomal subunits. Also involved in the hydrolysis of GTP during the formation of the 70S ribosomal complex. The sequence is that of Translation initiation factor IF-2 from Pseudomonas aeruginosa (strain LESB58).